Consider the following 889-residue polypeptide: Alanine--tRNA ligase (889 aa).

The Zn(2+) site is built by His569, His573, Cys671, and His675.

The protein belongs to the class-II aminoacyl-tRNA synthetase family. It depends on Zn(2+) as a cofactor.

It localises to the cytoplasm. The catalysed reaction is tRNA(Ala) + L-alanine + ATP = L-alanyl-tRNA(Ala) + AMP + diphosphate. Its function is as follows. Catalyzes the attachment of alanine to tRNA(Ala) in a two-step reaction: alanine is first activated by ATP to form Ala-AMP and then transferred to the acceptor end of tRNA(Ala). Also edits incorrectly charged Ser-tRNA(Ala) and Gly-tRNA(Ala) via its editing domain. The polypeptide is Alanine--tRNA ligase (Synechococcus sp. (strain CC9605)).